A 270-amino-acid polypeptide reads, in one-letter code: Transcription factor PU.1 (270 aa).

The disordered stretch occupies residues 123–164; that stretch reads SLSPAQPSSDEEEGERQSPPLEVSDGEADGLEPGPGLLPGET. Phosphoserine occurs at positions 140 and 146. Residues 153–164 are compositionally biased toward low complexity; it reads LEPGPGLLPGET. Positions 170-253 form a DNA-binding region, ETS; it reads IRLYQFLLDL…VKKKLTYQFS (84 aa). The DNA site is built by Lys217, Arg230, Arg233, and Lys243.

The protein belongs to the ETS family. Binds DNA as a monomer. Can form homomers. Directly interacts with CEBPD/NF-IL6-beta; this interaction does not affect DNA-binding properties of each partner. Interacts with NONO/p54(nrb). Interacts with RUNX1/AML1. Interacts with GFI1; the interaction represses SPI1 transcriptional activity, hence blocks SPI1-induced macrophage differentiation of myeloid progenitor cells. Interacts with CEBPE. Interacts with IRF4/Pip and IRF8. Interacts with JUN. Interacts with RB1. Interacts with TBP. As to expression, in the bone marrow, concentrated in hematopoietic stem cell, lymphoid progenitor, myeloid lineage (granulocyte macrophage progenitors, classical dendritic cells, monocytes) and B-cell clusters. Among B-cells, predominantly expressed in pre-B1 cells. Expressed in germinal center B-cells.

The protein resides in the nucleus. Transcriptional activity at macrophage-specific genes is inhibited by interaction with GFI1, which results in the inhibition of SPI1-induced macrophage differentiation of myeloid progenitor cells, but not that of the granulocyte lineage. Pioneer transcription factor, which controls hematopoietic cell fate by decompacting stem cell heterochromatin and allowing other transcription factors to enter otherwise inaccessible genomic sites. Once in open chromatin, can directly control gene expression by binding genetic regulatory elements and can also more broadly influence transcription by recruiting transcription factors, such as interferon regulatory factors (IRFs), to otherwise inaccessible genomic regions. Transcriptionally activates genes important for myeloid and lymphoid lineages, such as CSF1R. Transcriptional activation from certain promoters, possibly containing low affinity binding sites, is achieved cooperatively with other transcription factors. FCER1A transactivation is achieved in cooperation with GATA1. May be particularly important for the pro- to pre-B cell transition. Binds (via the ETS domain) onto the purine-rich DNA core sequence 5'-GAGGAA-3', also known as the PU-box. In vitro can bind RNA and interfere with pre-mRNA splicing. This is Transcription factor PU.1 (SPI1) from Homo sapiens (Human).